The chain runs to 787 residues: ER degradation-enhancing alpha-mannosidase-like protein 1 (787 aa).

A signal peptide spans M1–S22. N-linked (GlcNAc...) asparagine glycans are attached at residues N479, N609, N670, N693, and N756.

Belongs to the glycosyl hydrolase 47 family.

It localises to the endoplasmic reticulum lumen. Alpha-mannosidase-like protein involved in endoplasmic reticulum-associated degradation (ERAD). Delivers misfolded glycoproteins to proteasomes. It lacks mannosidase activity. In Schizosaccharomyces pombe (strain 972 / ATCC 24843) (Fission yeast), this protein is ER degradation-enhancing alpha-mannosidase-like protein 1 (mnl1).